Consider the following 502-residue polypeptide: MKIRMRKKWMALPLAAMMIAGCSHSETSNSASGSKDTIKIMAPLLSPESPSDKSPSLKALEKYTGKEIKVTWVPDSSYNDKFNIVMASGEMPHAIVIKDKSAGFIKSVKAGAFWELSPYLKDYKNLSQADEKILKNSSVNGEVYGIYRTRDLIRACMIIRTDWLKNVGLDMPETLDDFYEVLKAFKEKDPDGNGKDDTYGMVVPKWMGLGNGSPWDVLQIWFGAPNRYGVENGKLIPDFTTKEYMDALTFFKKLYDEGLINKDFAVMDSAKWNDPVVKGKAGVIVDTGSRASQIQSAMEEADESNKDIIDIVGSLEGPNGKRTFPTSGYSGMITIPKSSVKTEKELKEVLSFLDKMNDKEAQILTNNGVKGRNYELKDGVFTSLEKNNKSLLYEHEGLAQFSMSIPKSEYYIEDQKTKLFQHRKDIITEGEKIAVFNPAESLVSDVYTQKGAQLDNIILDARTQFIIGEIDEKGFDDAVELWKKSGGNELMKDLNKLYQSSK.

Positions 1–21 are cleaved as a signal peptide; it reads MKIRMRKKWMALPLAAMMIAG. The N-palmitoyl cysteine moiety is linked to residue Cys22. The S-diacylglycerol cysteine moiety is linked to residue Cys22.

It localises to the cell membrane. The protein is Lipoprotein LipO (lipO) of Bacillus subtilis (strain 168).